The sequence spans 679 residues: DNA ligase (679 aa).

Residues 41–45, 90–91, and E120 each bind NAD(+); these read DSVYD and SL. K122 (N6-AMP-lysine intermediate) is an active-site residue. NAD(+) is bound by residues R143, E177, K293, and K317. Positions 411, 414, 429, and 434 each coordinate Zn(2+). Positions 597–679 constitute a BRCT domain; that stretch reads DSNSWFAGKR…SETMREDAQA (83 aa).

It belongs to the NAD-dependent DNA ligase family. LigA subfamily. Mg(2+) is required as a cofactor. Requires Mn(2+) as cofactor.

It carries out the reaction NAD(+) + (deoxyribonucleotide)n-3'-hydroxyl + 5'-phospho-(deoxyribonucleotide)m = (deoxyribonucleotide)n+m + AMP + beta-nicotinamide D-nucleotide.. DNA ligase that catalyzes the formation of phosphodiester linkages between 5'-phosphoryl and 3'-hydroxyl groups in double-stranded DNA using NAD as a coenzyme and as the energy source for the reaction. It is essential for DNA replication and repair of damaged DNA. In Lactiplantibacillus plantarum (strain ATCC BAA-793 / NCIMB 8826 / WCFS1) (Lactobacillus plantarum), this protein is DNA ligase.